A 324-amino-acid polypeptide reads, in one-letter code: MKTALILLSILGMACAFSMKNFHRRIKAEDSEENGVFKYRPRYFLYKHAYFYPPLKRFPVQGGSDSSEENGDGDSSEEEGEEEETSNEEENNEDSEGNEDQEAEAENSTLSTLSGVTASYGAETTPQAQTFELAALQLPKKAGDAESRAPKVKESDEEEEEEEEEEENENEEAEVDENELAVNGTSTNSTEVDGGNGSSGGDNGEEAEAEEASVTEAGAEGTTGGRELTSVGTQTAVLLNGFQQTTPPPEAYGTTSPPIRKSSTVEYGGEYEQTGNEYNNEYEVYDNENGEPRGDTYRAYEDEYSYYKGHGYEGYEGQNYYYHQ.

Residues 1–16 (MKTALILLSILGMACA) form the signal peptide. A phosphoserine mark is found at Ser31, Ser67, Ser75, Ser76, and Ser95. Disordered regions lie at residues 60–228 (VQGG…GREL) and 243–263 (QQTTPPPEAYGTTSPPIRKSS). The segment covering 66-105 (SSEENGDGDSSEEEGEEEETSNEEENNEDSEGNEDQEAEA) has biased composition (acidic residues). Residues 106–130 (ENSTLSTLSGVTASYGAETTPQAQT) are compositionally biased toward polar residues. N-linked (GlcNAc...) asparagine glycosylation occurs at Asn107. Residues 141 to 154 (KAGDAESRAPKVKE) are compositionally biased toward basic and acidic residues. Phosphoserine is present on Ser155. Positions 155 to 179 (SDEEEEEEEEEEENENEEAEVDENE) are enriched in acidic residues. N-linked (GlcNAc...) asparagine glycosylation is found at Asn183, Asn188, and Asn196. The segment covering 203–213 (NGEEAEAEEAS) has biased composition (acidic residues). Positions 253-263 (GTTSPPIRKSS) are enriched in polar residues. The Integrin-binding motif signature appears at 293 to 295 (RGD). Sulfotyrosine occurs at positions 320 and 321.

In terms of assembly, monomer. Interacts with integrins; the interaction promotes cell adhesion.

It is found in the secreted. Its function is as follows. Binds tightly to hydroxyapatite. Appears to form an integral part of the mineralized matrix. Probably important to cell-matrix interaction. Promotes adhesion and migration of various cells via the alpha-V/beta-3 integrin receptor (ITGAV:ITGB3). The sequence is that of Integrin-binding sialoprotein (Ibsp) from Mus musculus (Mouse).